The following is a 60-amino-acid chain: Large ribosomal subunit protein eL37 (60 aa).

4 residues coordinate Zn(2+): cysteine 19, cysteine 22, cysteine 34, and cysteine 37. The C4-type zinc-finger motif lies at 19–37 (CRRCGRMSYHKRHKICSSC).

Belongs to the eukaryotic ribosomal protein eL37 family. Zn(2+) is required as a cofactor.

Functionally, binds to the 23S rRNA. The polypeptide is Large ribosomal subunit protein eL37 (Methanospirillum hungatei JF-1 (strain ATCC 27890 / DSM 864 / NBRC 100397 / JF-1)).